We begin with the raw amino-acid sequence, 779 residues long: Serine/threonine-protein kinase SIK1 (779 aa).

In terms of domain architecture, Protein kinase spans 27–278 (YDVERTLGKG…IAQIRQHRWM (252 aa)). ATP is bound by residues 33-41 (LGKGNFAVV) and Lys-56. Asp-149 (proton acceptor) is an active-site residue. Thr-182 bears the Phosphothreonine; by LKB1 and GSK3-beta mark. Residue Ser-186 is modified to Phosphoserine; by autocatalysis. Residues 303–343 (DYNEQVLGIMQALGIDRQRTIESLQNSSYNHFAAIYYLLLE) form the UBA domain. Position 322 is a phosphothreonine; by CaMK1 (Thr-322). Disordered regions lie at residues 350-375 (SAQP…LSSL) and 449-472 (EARQ…STGR). The segment covering 363–373 (RQPQLRSSDLS) has biased composition (polar residues). Phosphoserine; by PKA is present on Ser-577. Positions 586–612 (KAFRQQLRKNARTKGFLGLNKIKGLAR) are RK-rich region. The interval 621–641 (TPRGGMSTFHTPAPSSGLQGC) is disordered. The span at 628–641 (TFHTPAPSSGLQGC) shows a compositional bias: polar residues.

The protein belongs to the protein kinase superfamily. CAMK Ser/Thr protein kinase family. AMPK subfamily. In terms of assembly, interacts (when phosphorylated on Thr-182 and Ser-186) with YWHAZ. Interacts with ATP1A1. It depends on Mg(2+) as a cofactor. Phosphorylated at Thr-182 by STK11/LKB1 in complex with STE20-related adapter-alpha (STRADA) pseudo kinase and CAB39, leading to its activation. Phosphorylation at Thr-182 promotes autophosphorylation at Ser-186, which is required for sustained activity. Autophosphorylation at Ser-186 is maintained by sequential phosphorylation at Thr-182 by GSK3-beta. GSK3-beta cannot initiate phosphorylation at Thr-182, it can only maintain it. Phosphorylation at Ser-577 by PKA promotes translocation to the cytoplasm. Phosphorylation at Thr-322 by CaMK1 following intracellular sodium concentration leads to activation. As to expression, expressed in lung, skin, ovary, heart and stomach. No expression in brain, liver or adult skeletal muscle but is present in skeletal muscle progenitor cells of the somite beginning at 9.5 dpc. Present at 8.0 dpc in the monolayer of presumptive myocardial cells but rapidly down-regulated at 8.5 dpc upon primitive ventricle formation, although still present in myocardial cells that will populate the primitive atrium and bulbus cordis. At 9.5 dpc expression is down-regulated in the primitive atrium but observed in the sinus venosus and truncus arteriosus.

It is found in the cytoplasm. The protein resides in the nucleus. The enzyme catalyses L-seryl-[protein] + ATP = O-phospho-L-seryl-[protein] + ADP + H(+). It catalyses the reaction L-threonyl-[protein] + ATP = O-phospho-L-threonyl-[protein] + ADP + H(+). Its activity is regulated as follows. Activated by phosphorylation on Thr-182. Also activated by phosphorylation on Thr-322 in response to increases in intracellular sodium in parallel with elevations in intracellular calcium through the reversible sodium/calcium exchanger. In terms of biological role, serine/threonine-protein kinase involved in various processes such as cell cycle regulation, gluconeogenesis and lipogenesis regulation, muscle growth and differentiation and tumor suppression. Phosphorylates HDAC4, HDAC5, PPME1, SREBF1, CRTC1/TORC1 and CRTC2/TORC2. Acts as a tumor suppressor and plays a key role in p53/TP53-dependent anoikis, a type of apoptosis triggered by cell detachment: required for phosphorylation of p53/TP53 in response to loss of adhesion and is able to suppress metastasis. Part of a sodium-sensing signaling network, probably by mediating phosphorylation of PPME1: following increases in intracellular sodium, SIK1 is activated by CaMK1 and phosphorylates PPME1 subunit of protein phosphatase 2A (PP2A), leading to dephosphorylation of sodium/potassium-transporting ATPase ATP1A1 and subsequent increase activity of ATP1A1. Acts as a regulator of muscle cells by phosphorylating and inhibiting class II histone deacetylases HDAC4 and HDAC5, leading to promote expression of MEF2 target genes in myocytes. Also required during cardiomyogenesis by regulating the exit of cardiomyoblasts from the cell cycle via down-regulation of CDKN1C/p57Kip2. Acts as a regulator of hepatic gluconeogenesis by phosphorylating and repressing the CREB-specific coactivators CRTC1/TORC1 and CRTC2/TORC2, leading to inhibit CREB activity. Also regulates hepatic lipogenesis by phosphorylating and inhibiting SREBF1. In concert with CRTC1/TORC1, regulates the light-induced entrainment of the circadian clock by attenuating PER1 induction; represses CREB-mediated transcription of PER1 by phosphorylating and deactivating CRTC1/TORC1. The polypeptide is Serine/threonine-protein kinase SIK1 (Sik1) (Mus musculus (Mouse)).